The following is a 218-amino-acid chain: Adenylate kinase (218 aa).

10-15 provides a ligand contact to ATP; sequence GAGKGT. An NMP region spans residues 30–59; that stretch reads STGDMLRAAVKAGTPLGLQAKAVMDSGSLV. AMP-binding positions include T31, R36, 57 to 59, 85 to 88, and Q92; these read SLV and GFPR. The tract at residues 122-159 is LID; that stretch reads GRRSHPASGRTYHVRFNPPKIDGKDDLTGEALLQREDD. ATP-binding positions include R123 and 132–133; that span reads TY. 2 residues coordinate AMP: R156 and R167. G203 is an ATP binding site.

It belongs to the adenylate kinase family. As to quaternary structure, monomer.

The protein resides in the cytoplasm. The catalysed reaction is AMP + ATP = 2 ADP. Its pathway is purine metabolism; AMP biosynthesis via salvage pathway; AMP from ADP: step 1/1. Functionally, catalyzes the reversible transfer of the terminal phosphate group between ATP and AMP. Plays an important role in cellular energy homeostasis and in adenine nucleotide metabolism. The protein is Adenylate kinase of Verminephrobacter eiseniae (strain EF01-2).